Reading from the N-terminus, the 352-residue chain is Photosystem II D2 protein (352 aa).

Thr2 bears the N-acetylthreonine mark. The residue at position 2 (Thr2) is a Phosphothreonine. Residues 40–60 form a helical membrane-spanning segment; that stretch reads TAYLALGGWFTGTTFVTSWYT. His117 provides a ligand contact to chlorophyll a. The helical transmembrane segment at 124 to 140 threads the bilayer; that stretch reads GFMLRQFEIARSVKIRP. Gln129 and Asn142 together coordinate pheophytin a. Residues 152–165 form a helical membrane-spanning segment; sequence VFVSVFLIYPLGQS. His197 serves as a coordination point for chlorophyll a. A helical membrane pass occupies residues 207-227; it reads AALLCAIHGATVENTLFEDGD. Positions 214 and 261 each coordinate a plastoquinone. Residue His214 participates in Fe cation binding. His268 is a binding site for Fe cation. The chain crosses the membrane as a helical span at residues 278 to 294; the sequence is GLWMSAIGVVGLALNLR.

The protein belongs to the reaction center PufL/M/PsbA/D family. As to quaternary structure, PSII is composed of 1 copy each of membrane proteins PsbA, PsbB, PsbC, PsbD, PsbE, PsbF, PsbH, PsbI, PsbJ, PsbK, PsbL, PsbM, PsbT, PsbX, PsbY, PsbZ, Psb30/Ycf12, at least 3 peripheral proteins of the oxygen-evolving complex and a large number of cofactors. It forms dimeric complexes. The D1/D2 heterodimer binds P680, chlorophylls that are the primary electron donor of PSII, and subsequent electron acceptors. It shares a non-heme iron and each subunit binds pheophytin, quinone, additional chlorophylls, carotenoids and lipids. There is also a Cl(-1) ion associated with D1 and D2, which is required for oxygen evolution. The PSII complex binds additional chlorophylls, carotenoids and specific lipids. serves as cofactor.

The protein localises to the plastid. The protein resides in the chloroplast thylakoid membrane. The enzyme catalyses 2 a plastoquinone + 4 hnu + 2 H2O = 2 a plastoquinol + O2. Functionally, photosystem II (PSII) is a light-driven water:plastoquinone oxidoreductase that uses light energy to abstract electrons from H(2)O, generating O(2) and a proton gradient subsequently used for ATP formation. It consists of a core antenna complex that captures photons, and an electron transfer chain that converts photonic excitation into a charge separation. The D1/D2 (PsbA/PsbD) reaction center heterodimer binds P680, the primary electron donor of PSII as well as several subsequent electron acceptors. D2 is needed for assembly of a stable PSII complex. The sequence is that of Photosystem II D2 protein from Chlorella vulgaris (Green alga).